The primary structure comprises 183 residues: Capsid protein (183 aa).

The disordered stretch occupies residues 136–183; the sequence is NAPILSTLPETTVVRRRGRSPRRRTPSPRRRRSQSPRRRRSQSPASQC. The span at 149 to 176 shows a compositional bias: basic residues; that stretch reads VRRRGRSPRRRTPSPRRRRSQSPRRRRS. Phosphoserine; by host occurs at positions 155, 162, and 170. One copy of the 1; half-length repeat lies at 155 to 161; that stretch reads SPRRRTP. The segment at 155-177 is 3 X 8 AA repeats of S-P-R-R-R-[PR]-S-Q; sequence SPRRRTPSPRRRRSQSPRRRRSQ. Positions 158–175 match the Bipartite nuclear localization signal motif; it reads RRTPSPRRRRSQSPRRRR. Tandem repeats lie at residues 162–169 and 170–177. The interval 177–183 is RNA binding; the sequence is QSPASQC.

This sequence belongs to the orthohepadnavirus core antigen family. Homodimerizes, then multimerizes. Interacts with cytosol exposed regions of viral L glycoprotein present in the reticulum-to-Golgi compartment. Interacts with human FLNB. Phosphorylated form interacts with host importin alpha; this interaction depends on the exposure of the NLS, which itself depends upon genome maturation and/or phosphorylation of the capsid protein. Interacts with host NUP153. In terms of processing, phosphorylated by host SRPK1, SRPK2, and maybe protein kinase C or GAPDH. Phosphorylation is critical for pregenomic RNA packaging. Protein kinase C phosphorylation is stimulated by HBx protein and may play a role in transport of the viral genome to the nucleus at the late step during the viral replication cycle.

The protein resides in the virion. It localises to the host cytoplasm. Its function is as follows. Self assembles to form an icosahedral capsid. Most capsids appear to be large particles with an icosahedral symmetry of T=4 and consist of 240 copies of capsid protein, though a fraction forms smaller T=3 particles consisting of 180 capsid proteins. Entering capsids are transported along microtubules to the nucleus. Phosphorylation of the capsid is thought to induce exposure of nuclear localization signal in the C-terminal portion of the capsid protein that allows binding to the nuclear pore complex via the importin (karyopherin-) alpha and beta. Capsids are imported in intact form through the nuclear pore into the nuclear basket, where it probably binds NUP153. Only capsids that contain the mature viral genome can release the viral DNA and capsid protein into the nucleoplasm. Immature capsids get stuck in the basket. Capsids encapsulate the pre-genomic RNA and the P protein. Pre-genomic RNA is reverse-transcribed into DNA while the capsid is still in the cytoplasm. The capsid can then either be directed to the nucleus, providing more genomes for transcription, or bud through the endoplasmic reticulum to provide new virions. The chain is Capsid protein from Hepatitis B virus genotype F2 (isolate Brazil/w4B) (HBV-F).